The sequence spans 338 residues: Ketol-acid reductoisomerase (NADP(+)) (338 aa).

In terms of domain architecture, KARI N-terminal Rossmann spans 1–181 (MKVFYDKDAD…GGGRAGIIET (181 aa)). NADP(+) contacts are provided by residues 24 to 27 (YGSQ), R47, and S52. H107 is an active-site residue. G133 contacts NADP(+). In terms of domain architecture, KARI C-terminal knotted spans 182–327 (NFREETETDL…AKLRSMMPWI (146 aa)). 4 residues coordinate Mg(2+): D190, E194, E226, and E230. S251 lines the substrate pocket.

Belongs to the ketol-acid reductoisomerase family. Requires Mg(2+) as cofactor.

It carries out the reaction (2R)-2,3-dihydroxy-3-methylbutanoate + NADP(+) = (2S)-2-acetolactate + NADPH + H(+). It catalyses the reaction (2R,3R)-2,3-dihydroxy-3-methylpentanoate + NADP(+) = (S)-2-ethyl-2-hydroxy-3-oxobutanoate + NADPH + H(+). It functions in the pathway amino-acid biosynthesis; L-isoleucine biosynthesis; L-isoleucine from 2-oxobutanoate: step 2/4. Its pathway is amino-acid biosynthesis; L-valine biosynthesis; L-valine from pyruvate: step 2/4. Involved in the biosynthesis of branched-chain amino acids (BCAA). Catalyzes an alkyl-migration followed by a ketol-acid reduction of (S)-2-acetolactate (S2AL) to yield (R)-2,3-dihydroxy-isovalerate. In the isomerase reaction, S2AL is rearranged via a Mg-dependent methyl migration to produce 3-hydroxy-3-methyl-2-ketobutyrate (HMKB). In the reductase reaction, this 2-ketoacid undergoes a metal-dependent reduction by NADPH to yield (R)-2,3-dihydroxy-isovalerate. This is Ketol-acid reductoisomerase (NADP(+)) from Paraburkholderia phytofirmans (strain DSM 17436 / LMG 22146 / PsJN) (Burkholderia phytofirmans).